Here is a 615-residue protein sequence, read N- to C-terminus: Fibrinogen alpha chain (615 aa).

Residues 1 to 19 (MFSVRDLCLVLSLVGAIKT) form the signal peptide. Residues 71–602 (CRMKGLIDEV…GHTKARPARG (532 aa)) adopt a coiled-coil conformation. The segment at 267–427 (FGGDGHARGD…TKQEFHTGKL (161 aa)) is disordered. Residues 293 to 302 (GTSSIGNVNP) show a composition bias toward polar residues. An O-linked (GalNAc...) threonine glycan is attached at T325. Low complexity predominate over residues 373–396 (GSAGTWNTGSSGSSSFRPDSSGHG). Residues C455 and C485 are joined by a disulfide bond. The interval 530–615 (EFAALGESGS…SPLGEPSLTP (86 aa)) is disordered. Over residues 537-549 (SGSSSSKTSTHSK) the composition is skewed to low complexity. The span at 550 to 560 (QFVSSSTTVNR) shows a compositional bias: polar residues. Residues 591–601 (QKGHTKARPAR) show a composition bias toward basic residues.

In terms of assembly, heterohexamer; disulfide linked. Contains 2 sets of 3 non-identical chains (alpha, beta and gamma). The 2 heterotrimers are in head to head conformation with the N-termini in a small central domain. Post-translationally, conversion of fibrinogen to fibrin is triggered by thrombin, which cleaves fibrinopeptides A and B from alpha and beta chains, and thus exposes the N-terminal polymerization sites responsible for the formation of the soft clot. The soft clot is converted into the hard clot by factor XIIIA which catalyzes the epsilon-(gamma-glutamyl)lysine cross-linking between gamma chains (stronger) and between alpha chains (weaker) of different monomers. In terms of processing, forms F13A-mediated cross-links between a glutamine and the epsilon-amino group of a lysine residue, forming fibronectin-fibrinogen heteropolymers.

Its subcellular location is the secreted. Its function is as follows. Cleaved by the protease thrombin to yield monomers which, together with fibrinogen beta (FGB) and fibrinogen gamma (FGG), polymerize to form an insoluble fibrin matrix. Fibrin has a major function in hemostasis as one of the primary components of blood clots. In addition, functions during the early stages of wound repair to stabilize the lesion and guide cell migration during re-epithelialization. Was originally thought to be essential for platelet aggregation, based on in vitro studies using anticoagulated blood. However, subsequent studies have shown that it is not absolutely required for thrombus formation in vivo. Enhances expression of SELP in activated platelets via an ITGB3-dependent pathway. Maternal fibrinogen is essential for successful pregnancy. Fibrin deposition is also associated with infection, where it protects against IFNG-mediated hemorrhage. May also facilitate the immune response via both innate and T-cell mediated pathways. The protein is Fibrinogen alpha chain (FGA) of Bos taurus (Bovine).